The sequence spans 478 residues: Cytochrome c-552 (478 aa).

Residues Met-1–Ala-26 form the signal peptide. Heme c is bound at residue His-94. 3 residues coordinate heme: Cys-122, Cys-125, and Lys-126. Residues Cys-160, Cys-163, His-164, Cys-209, Cys-212, and His-213 each contribute to the heme c site. The Ca(2+) site is built by Glu-215, Tyr-216, Lys-261, and Gln-263. Tyr-216 lines the substrate pocket. His-264 serves as a coordination point for substrate. Heme c-binding residues include His-275, Cys-282, Cys-285, His-286, His-301, Cys-314, Cys-317, His-318, and His-393.

The protein belongs to the cytochrome c-552 family. Requires Ca(2+) as cofactor. It depends on heme c as a cofactor.

It is found in the periplasm. The enzyme catalyses 6 Fe(III)-[cytochrome c] + NH4(+) + 2 H2O = 6 Fe(II)-[cytochrome c] + nitrite + 8 H(+). It participates in nitrogen metabolism; nitrate reduction (assimilation). Functionally, catalyzes the reduction of nitrite to ammonia, consuming six electrons in the process. This chain is Cytochrome c-552, found in Salmonella typhi.